Here is a 120-residue protein sequence, read N- to C-terminus: Small ribosomal subunit protein uS12c (120 aa).

This sequence belongs to the universal ribosomal protein uS12 family. As to quaternary structure, part of the 30S ribosomal subunit.

The protein resides in the plastid. It localises to the apicoplast. Functionally, with S4 and S5 plays an important role in translational accuracy. Located at the interface of the 30S and 50S subunits. This is Small ribosomal subunit protein uS12c (rps12) from Eimeria tenella (Coccidian parasite).